The primary structure comprises 106 residues: Urease subunit beta (106 aa).

This sequence belongs to the urease beta subunit family. In terms of assembly, heterotrimer of UreA (gamma), UreB (beta) and UreC (alpha) subunits. Three heterotrimers associate to form the active enzyme.

Its subcellular location is the cytoplasm. The enzyme catalyses urea + 2 H2O + H(+) = hydrogencarbonate + 2 NH4(+). It functions in the pathway nitrogen metabolism; urea degradation; CO(2) and NH(3) from urea (urease route): step 1/1. This is Urease subunit beta from Parasynechococcus marenigrum (strain WH8102).